We begin with the raw amino-acid sequence, 106 residues long: Large ribosomal subunit protein eL42 (106 aa).

It belongs to the eukaryotic ribosomal protein eL42 family.

The chain is Large ribosomal subunit protein eL42 (RPL44) from Wickerhamomyces ciferrii (strain ATCC 14091 / BCRC 22168 / CBS 111 / JCM 3599 / NBRC 0793 / NRRL Y-1031 F-60-10) (Yeast).